A 776-amino-acid chain; its full sequence is Transferrin receptor protein 1 (776 aa).

Topologically, residues 1-70 (MDHARAALSN…QPQRNGKRLC (70 aa)) are cytoplasmic. Positions 19–22 (YTRF) match the Endocytosis signal motif. Serine 23 carries the post-translational modification Phosphoserine. The S-palmitoyl cysteine moiety is linked to residue cysteine 70. Residues 71-91 (FLVIAAVLLLLIGFLIGYLSY) traverse the membrane as a helical; Signal-anchor for type II membrane protein segment. Residues 92-776 (RGRIELAARC…GDIWETDNEF (685 aa)) lie on the Extracellular side of the membrane. A PA domain is found at 230-322 (SESGSVSGKP…GTGDPYTPGF (93 aa)). Residues asparagine 261, asparagine 326, and asparagine 391 are each glycosylated (N-linked (GlcNAc...) asparagine). A ligand-binding region spans residues 586 to 776 (KGDTLENLRK…GDIWETDNEF (191 aa)). The Cell attachment site motif lies at 662–664 (RGD). An N-linked (GlcNAc...) asparagine glycan is attached at asparagine 738.

Belongs to the peptidase M28 family. M28B subfamily. In terms of assembly, homodimer; disulfide-linked. Binds one transferrin molecule per subunit. Stearoylated. Stearoylation does not affect iron uptake. Post-translationally, N- and O-glycosylated, phosphorylated and palmitoylated.

The protein localises to the cell membrane. It is found in the melanosome. Its function is as follows. Cellular uptake of iron occurs via receptor-mediated endocytosis of ligand-occupied transferrin receptor into specialized endosomes. Endosomal acidification leads to iron release. The apotransferrin-receptor complex is then recycled to the cell surface with a return to neutral pH and the concomitant loss of affinity of apotransferrin for its receptor. Transferrin receptor is necessary for development of erythrocytes and the nervous system. Acts as a lipid sensor that regulates mitochondrial fusion by regulating activation of the JNK pathway. When dietary levels of stearate (C18:0) are low, promotes activation of the JNK pathway, resulting in HUWE1-mediated ubiquitination and subsequent degradation of the mitofusin MFN2 and inhibition of mitochondrial fusion. When dietary levels of stearate (C18:0) are high, TFRC stearoylation inhibits activation of the JNK pathway and thus degradation of the mitofusin MFN2. Mediates uptake of NICOL1 into fibroblasts where it may regulate extracellular matrix production. The polypeptide is Transferrin receptor protein 1 (TFRC) (Gallus gallus (Chicken)).